The sequence spans 889 residues: DNA mismatch repair protein MutS (889 aa).

Residues 1-17 (MPKTNSSAASTNANPSS) show a composition bias toward low complexity. Positions 1–20 (MPKTNSSAASTNANPSSLQQ) are disordered. Residue 640-647 (GPNMGGKS) coordinates ATP.

The protein belongs to the DNA mismatch repair MutS family.

Its function is as follows. This protein is involved in the repair of mismatches in DNA. It is possible that it carries out the mismatch recognition step. This protein has a weak ATPase activity. In Pseudoalteromonas atlantica (strain T6c / ATCC BAA-1087), this protein is DNA mismatch repair protein MutS.